A 377-amino-acid chain; its full sequence is uncharacterized protein (377 aa).

2 helical membrane passes run 23-43 (LKFI…FIAY) and 251-271 (GSFI…SISY).

The protein resides in the cell membrane. This is an uncharacterized protein from Methanocaldococcus jannaschii (strain ATCC 43067 / DSM 2661 / JAL-1 / JCM 10045 / NBRC 100440) (Methanococcus jannaschii).